Reading from the N-terminus, the 135-residue chain is Glutaredoxin-C5 (135 aa).

Residues 29–134 (AERVERLASE…PLLKEAGALW (106 aa)) enclose the Glutaredoxin domain. Residues cysteine 49 and cysteine 52 are joined by a disulfide bond. Residues 132–135 (ALWL) carry the Responsive for interaction with TGA factors motif.

This sequence belongs to the glutaredoxin family. CC-type subfamily.

It is found in the cytoplasm. Its subcellular location is the nucleus. In terms of biological role, has a glutathione-disulfide oxidoreductase activity in the presence of NADPH and glutathione reductase. Reduces low molecular weight disulfides and proteins. The chain is Glutaredoxin-C5 (GRXC5) from Oryza sativa subsp. japonica (Rice).